Consider the following 121-residue polypeptide: Putative iron-sulfur cluster insertion protein ErpA (121 aa).

Positions 49, 113, and 115 each coordinate iron-sulfur cluster.

This sequence belongs to the HesB/IscA family. In terms of assembly, homodimer. It depends on iron-sulfur cluster as a cofactor.

Functionally, required for insertion of 4Fe-4S clusters. This Nitrosomonas eutropha (strain DSM 101675 / C91 / Nm57) protein is Putative iron-sulfur cluster insertion protein ErpA.